Here is a 139-residue protein sequence, read N- to C-terminus: Ribulose bisphosphate carboxylase small subunit (139 aa).

Belongs to the RuBisCO small chain family. As to quaternary structure, heterohexadecamer of 8 large and 8 small subunits.

Its subcellular location is the plastid. The protein resides in the chloroplast. Functionally, ruBisCO catalyzes two reactions: the carboxylation of D-ribulose 1,5-bisphosphate, the primary event in carbon dioxide fixation, as well as the oxidative fragmentation of the pentose substrate in the photorespiration process. Both reactions occur simultaneously and in competition at the same active site. Although the small subunit is not catalytic it is essential for maximal activity. The sequence is that of Ribulose bisphosphate carboxylase small subunit from Trieres chinensis (Marine centric diatom).